A 366-amino-acid chain; its full sequence is Glutamate 5-kinase (366 aa).

Lysine 17 serves as a coordination point for ATP. Substrate contacts are provided by serine 57, aspartate 144, and asparagine 156. Residues 176-177 (SD) and 216-222 (TGGMASK) contribute to the ATP site. Residues 278 to 352 (QGILHIDEGA…GKSTQELPAE (75 aa)) form the PUA domain.

This sequence belongs to the glutamate 5-kinase family.

The protein resides in the cytoplasm. The enzyme catalyses L-glutamate + ATP = L-glutamyl 5-phosphate + ADP. It functions in the pathway amino-acid biosynthesis; L-proline biosynthesis; L-glutamate 5-semialdehyde from L-glutamate: step 1/2. Functionally, catalyzes the transfer of a phosphate group to glutamate to form L-glutamate 5-phosphate. This is Glutamate 5-kinase from Rhodococcus jostii (strain RHA1).